The primary structure comprises 196 residues: Chloroplastic ATP-dependent Clp protease proteolytic subunit 1 (196 aa).

The Nucleophile role is filled by S101. Residue H126 is part of the active site.

Belongs to the peptidase S14 family. In terms of assembly, component of the chloroplastic Clp protease core complex which consist of at least 16 proteins: CLPP4 (3 copies), CLPP5 (3 copies), CLPR4 (2 copies), ClpP1 (1 copy), CLPP6 (1 copy), CLPR2 (1 copy), CLPT1 (1 copy), CLPT2 (1 copy) and 3 copies of CLPP3 and/or CLPR1 and/or CLPR3. The core complex is organized in two heptameric rings, one containing CLPP3,4,5,6 in a 1:2:3:1 ratio and the other CLPP1 and CLPR1,2,3,4 in a 3:1:1:1:1 ratio. As to expression, mostly expressed in leaves. Also detected in stems, and to a lower extent, in roots (at protein level).

Its subcellular location is the plastid. The protein localises to the chloroplast stroma. The enzyme catalyses Hydrolysis of proteins to small peptides in the presence of ATP and magnesium. alpha-casein is the usual test substrate. In the absence of ATP, only oligopeptides shorter than five residues are hydrolyzed (such as succinyl-Leu-Tyr-|-NHMec, and Leu-Tyr-Leu-|-Tyr-Trp, in which cleavage of the -Tyr-|-Leu- and -Tyr-|-Trp bonds also occurs).. Cleaves peptides in various proteins in a process that requires ATP hydrolysis. Has a chymotrypsin-like activity. Plays a major role in the degradation of misfolded proteins. This is Chloroplastic ATP-dependent Clp protease proteolytic subunit 1 from Arabidopsis thaliana (Mouse-ear cress).